Reading from the N-terminus, the 568-residue chain is 2-isopropylmalate synthase (568 aa).

The region spanning 37-313 (PRWLSTDLRD…DPMIDFSNID (277 aa)) is the Pyruvate carboxyltransferase domain. Residues aspartate 46, histidine 252, histidine 254, and asparagine 288 each coordinate Mg(2+). Residues 455 to 568 (EGVVGVMAYR…CSAVNRAQQS (114 aa)) are regulatory domain.

Belongs to the alpha-IPM synthase/homocitrate synthase family. LeuA type 2 subfamily. In terms of assembly, homodimer. Mg(2+) is required as a cofactor.

It localises to the cytoplasm. It catalyses the reaction 3-methyl-2-oxobutanoate + acetyl-CoA + H2O = (2S)-2-isopropylmalate + CoA + H(+). The protein operates within amino-acid biosynthesis; L-leucine biosynthesis; L-leucine from 3-methyl-2-oxobutanoate: step 1/4. Its function is as follows. Catalyzes the condensation of the acetyl group of acetyl-CoA with 3-methyl-2-oxobutanoate (2-ketoisovalerate) to form 3-carboxy-3-hydroxy-4-methylpentanoate (2-isopropylmalate). The chain is 2-isopropylmalate synthase from Thermobifida fusca (strain YX).